We begin with the raw amino-acid sequence, 115 residues long: Large ribosomal subunit protein bL19 (115 aa).

Belongs to the bacterial ribosomal protein bL19 family.

In terms of biological role, this protein is located at the 30S-50S ribosomal subunit interface and may play a role in the structure and function of the aminoacyl-tRNA binding site. The polypeptide is Large ribosomal subunit protein bL19 (Latilactobacillus sakei subsp. sakei (strain 23K) (Lactobacillus sakei subsp. sakei)).